Consider the following 472-residue polypeptide: Eukaryotic translation initiation factor 2 subunit 3, Y-linked (472 aa).

At A2 the chain carries N-acetylalanine. Phosphoserine is present on S16. Positions 39 to 247 (QATINIGTIG…YIVKKIPVPL (209 aa)) constitute a tr-type G domain. A G1 region spans residues 48–55 (GHVAHGKS). 51-56 (AHGKST) contacts GTP. The G2 stretch occupies residues 76–80 (NITIK). The tract at residues 134–137 (DCPG) is G3. GTP contacts are provided by residues 190–193 (NKID) and 225–227 (SAQ). Residues 190–193 (NKID) are G4. Residues 225–227 (SAQ) form a G5 region.

Belongs to the TRAFAC class translation factor GTPase superfamily. Classic translation factor GTPase family. EIF2G subfamily. As to quaternary structure, eIF2 is a heterotrimer composed of an alpha (EIF2S1), a beta (EIF2S2) and a gamma (Eif2s3x and Eif2s3y) chain. eIF2 is member of the 43S pre-initiation complex (43S PIC). Widely expressed in males.

The catalysed reaction is GTP + H2O = GDP + phosphate + H(+). Its function is as follows. Member of the eIF2 complex that functions in the early steps of protein synthesis by forming a ternary complex with GTP and initiator tRNA. This complex binds to a 40S ribosomal subunit, followed by mRNA binding to form the 43S pre-initiation complex (43S PIC). Junction of the 60S ribosomal subunit to form the 80S initiation complex is preceded by hydrolysis of the GTP bound to eIF2 and release of an eIF2-GDP binary complex. In order for eIF2 to recycle and catalyze another round of initiation, the GDP bound to eIF2 must exchange with GTP by way of a reaction catalyzed by eIF-2B. Along with its paralog on chromosome X, may contribute to spermatogenesis up to the round spermatid stage. The protein is Eukaryotic translation initiation factor 2 subunit 3, Y-linked (Eif2s3y) of Rattus norvegicus (Rat).